The primary structure comprises 77 residues: Large ribosomal subunit protein bL28 (77 aa).

This sequence belongs to the bacterial ribosomal protein bL28 family.

This Methylibium petroleiphilum (strain ATCC BAA-1232 / LMG 22953 / PM1) protein is Large ribosomal subunit protein bL28.